Here is a 347-residue protein sequence, read N- to C-terminus: Uroporphyrinogen decarboxylase (347 aa).

Substrate-binding positions include 36 to 40, D86, Y160, S212, and H326; that span reads RQAGR.

This sequence belongs to the uroporphyrinogen decarboxylase family. In terms of assembly, homodimer.

The protein localises to the cytoplasm. The enzyme catalyses uroporphyrinogen III + 4 H(+) = coproporphyrinogen III + 4 CO2. The protein operates within porphyrin-containing compound metabolism; protoporphyrin-IX biosynthesis; coproporphyrinogen-III from 5-aminolevulinate: step 4/4. Functionally, catalyzes the decarboxylation of four acetate groups of uroporphyrinogen-III to yield coproporphyrinogen-III. The polypeptide is Uroporphyrinogen decarboxylase (Wolbachia sp. subsp. Brugia malayi (strain TRS)).